The following is a 421-amino-acid chain: MTKSIQAIRGMSDTLPEEIPYWSFLENACRSVVSAYHYREIRFPVVEQTALFKRTIGEATDIVEKEMYTFTDRNGDSLTLRPEGTAGCVRAGIQNGLFYNQIQRLWYLGPMFRHERPQKGRYRQFYQLGVETYGMAGAPIEAELIFMCLRLWKALGLESCIHLELNTLGTLDSRNAYRQALVTYLQSREKELDEDSRRRLHTNPLRILDSKNPDLQPLLAEAPKLIDYLDETSRRHFDQLRSLLDQAEVPFIVNPTLVRGLDYYTHTVFEWVTDQLGAQGTVCAGGRYDNLVELLGGKSTPAAGFAAGLERLVLLLRGVQECLDKIDIYVVIAGEAVIQEGLLMTEQLRNVLPEWVIEADLSGSSLKSQFKRADKSGAKWALVIGEEEIKTNTVTLKHLRETVPQKNLTRDTLISYLKSEG.

The protein belongs to the class-II aminoacyl-tRNA synthetase family. Homodimer.

The protein resides in the cytoplasm. The enzyme catalyses tRNA(His) + L-histidine + ATP = L-histidyl-tRNA(His) + AMP + diphosphate + H(+). This is Histidine--tRNA ligase from Coxiella burnetii (strain CbuG_Q212) (Coxiella burnetii (strain Q212)).